Reading from the N-terminus, the 220-residue chain is Guanylate kinase (220 aa).

A Guanylate kinase-like domain is found at 3–180; the sequence is GRLFVMTGAS…AVADFLAILT (178 aa). 10 to 17 provides a ligand contact to ATP; sequence GASGVGKG.

Belongs to the guanylate kinase family.

It is found in the cytoplasm. The catalysed reaction is GMP + ATP = GDP + ADP. Essential for recycling GMP and indirectly, cGMP. This is Guanylate kinase from Thermus thermophilus (strain ATCC BAA-163 / DSM 7039 / HB27).